A 285-amino-acid polypeptide reads, in one-letter code: Avenin-like b2 (285 aa).

The N-terminal stretch at methionine 1–alanine 18 is a signal peptide.

The protein belongs to the prolamin family. Post-translationally, contains disulfide bonds.

Seed storage protein. Might be integrated via inter-chain disulfide bonds within the glutenin polymer. The polypeptide is Avenin-like b2 (Triticum aestivum (Wheat)).